The following is a 180-amino-acid chain: Immediate early response gene 2 protein (180 aa).

Residues 53-135 (MSEKSGQSVT…KRRSKTATDS (83 aa)) are disordered. A compositionally biased stretch (polar residues) spans 56–92 (KSGQSVTEECTSHTQEPMDTSSSTATPLRETSGQSSE). A compositionally biased stretch (basic and acidic residues) spans 93-103 (DGQRSGLEGHP).

Belongs to the IER family. In terms of assembly, interacts with FIBPB.

It is found in the nucleus. The protein localises to the cytoplasm. Functionally, DNA-binding protein that seems to act as a transcription factor. Mediates with FIBPB FGF-signaling in Kupffer's vesicle ciliogenesis and in the establishment of laterality in the embryo. This is Immediate early response gene 2 protein from Danio rerio (Zebrafish).